The following is a 437-amino-acid chain: Indole diterpene prenyltransferase anaPT (437 aa).

The tract at residues 1 to 28 (MSPLSMQTDSVQGTAENKSLETNGTSND) is disordered. Residues 102-103 (GF) and glutamate 111 contribute to the L-tryptophan site. Dimethylallyl diphosphate-binding residues include arginine 124, lysine 208, tyrosine 210, tyrosine 282, glutamine 355, tyrosine 357, tyrosine 422, and tyrosine 426.

The protein belongs to the tryptophan dimethylallyltransferase family.

The catalysed reaction is (R)-benzodiazepinedione + dimethylallyl diphosphate = (2R,3S,11R)-aszonalenin + diphosphate. It carries out the reaction (S)-benzodiazepinedione + dimethylallyl diphosphate = (2R,3S,11S)-aszonalenin + diphosphate. Its pathway is alkaloid biosynthesis. Functionally, indole diterpene prenyltransferase; part of the gene cluster that mediates the biosynthesis of the prenylated pyrroloindoline diketopiperazine acetylaszonalenin. The first step in the pathway is the formation of (R)-benzodiazepinedione by condensation of tryptophan and anthranilic acid catalyzed by the non-ribosomal peptide synthetase anaPS. The prenyltransferase anaPT then converts (R)-benzodiazepinedione to aszonalenin in the presence of dimethylallyl diphosphate (DMAPP) via C3-prenylation. The last step in the biosynthesis of acetylaszonalenin via acetylation of aszonalenin at position N1 catalyzed by anaAT. This Neosartorya fischeri (strain ATCC 1020 / DSM 3700 / CBS 544.65 / FGSC A1164 / JCM 1740 / NRRL 181 / WB 181) (Aspergillus fischerianus) protein is Indole diterpene prenyltransferase anaPT.